Consider the following 428-residue polypeptide: Glucose-1-phosphate adenylyltransferase (428 aa).

Alpha-D-glucose 1-phosphate is bound by residues Y114, G179, 194 to 195, and S212; that span reads EK.

It belongs to the bacterial/plant glucose-1-phosphate adenylyltransferase family. As to quaternary structure, homotetramer.

The catalysed reaction is alpha-D-glucose 1-phosphate + ATP + H(+) = ADP-alpha-D-glucose + diphosphate. Its pathway is glycan biosynthesis; glycogen biosynthesis. Functionally, involved in the biosynthesis of ADP-glucose, a building block required for the elongation reactions to produce glycogen. Catalyzes the reaction between ATP and alpha-D-glucose 1-phosphate (G1P) to produce pyrophosphate and ADP-Glc. This chain is Glucose-1-phosphate adenylyltransferase, found in Yersinia pseudotuberculosis serotype IB (strain PB1/+).